A 66-amino-acid chain; its full sequence is Large ribosomal subunit protein uL29 (66 aa).

The protein belongs to the universal ribosomal protein uL29 family.

This Bacillus licheniformis (strain ATCC 14580 / DSM 13 / JCM 2505 / CCUG 7422 / NBRC 12200 / NCIMB 9375 / NCTC 10341 / NRRL NRS-1264 / Gibson 46) protein is Large ribosomal subunit protein uL29.